A 1701-amino-acid chain; its full sequence is DDB1- and CUL4-associated factor homolog 1 (1701 aa).

Residues 224-245 (HAEQSTSNGTSIPSIKITSVDG) show a composition bias toward polar residues. Disordered regions lie at residues 224-269 (HAEQ…RRTE), 883-906 (DRPA…GNNF), and 932-961 (RPSN…TPTL). The LisH domain occupies 851–883 (NQAELLQLIHDHLLKSKLDSVAAMLKSEAKLPD). Polar residues predominate over residues 888 to 906 (RSINTPILNKPLPSSGNNF). 4 WD repeats span residues 1086–1125 (DHDE…DEGH), 1128–1169 (CHGS…QRVH), 1171–1210 (YRED…DTYL), and 1215–1252 (GLQY…HVFD). 2 consecutive short sequence motifs (DWD box) follow at residues 1237–1245 (LLWDVRKKN) and 1275–1282 (EVYDIRTF). Disordered stretches follow at residues 1384–1559 (IGRL…DINL), 1566–1585 (EARV…PVDP), and 1641–1701 (LVRG…DDEA). Acidic residues-rich tracts occupy residues 1390-1423 (NEDE…DEEI) and 1451-1461 (DDNDTLDDLDF). Over residues 1468–1479 (IIRRQAQRRRQR) the composition is skewed to basic residues. Acidic residues-rich tracts occupy residues 1494–1512 (EGSD…DPDF) and 1520–1543 (DLVD…DDDS). The segment covering 1567 to 1581 (ARVVENEGNNERPAR) has biased composition (basic and acidic residues). Acidic residues predominate over residues 1667-1678 (DTDEYQSEEEEI).

It belongs to the VPRBP/DCAF1 family. As to quaternary structure, component of the cul4-rbx1-ddb1-dcaf1 E3 ubiquitin-protein ligase complex.

It localises to the nucleus. It participates in protein modification; protein ubiquitination. Its function is as follows. Component of the cul4-rbx1-ddb1-dcaf1 E3 ubiquitin-protein ligase complex, dcaf1 may function as the substrate recognition module within this complex. The polypeptide is DDB1- and CUL4-associated factor homolog 1 (dcaf-1) (Caenorhabditis elegans).